The primary structure comprises 115 residues: Putative TGFB1-induced anti-apoptotic factor 1 (115 aa).

As to expression, not detectable in normal kidney and liver. Up-regulated in chronic and acute allograft rejection: expressed in the inflammatory infiltrate and in tubular epithelial cells.

The protein resides in the nucleus. Functionally, inhibits the cytotoxic effects of TNF-alpha and overexpressed TNF receptor adapters TRADD, FADD, and RIPK1. Involved in TGF-beta1 inhibition of IkappaB-alpha expression and suppression of TNF-mediated IkappaB-alpha degradation. In Homo sapiens (Human), this protein is Putative TGFB1-induced anti-apoptotic factor 1 (MYO18A).